Here is a 282-residue protein sequence, read N- to C-terminus: Release factor glutamine methyltransferase (282 aa).

S-adenosyl-L-methionine contacts are provided by residues 129–133 (GTGSG), Asp-151, Phe-180, and Asn-197. A substrate-binding site is contributed by 197 to 200 (NPPY).

It belongs to the protein N5-glutamine methyltransferase family. PrmC subfamily. Monomer and homodimer.

It catalyses the reaction L-glutaminyl-[peptide chain release factor] + S-adenosyl-L-methionine = N(5)-methyl-L-glutaminyl-[peptide chain release factor] + S-adenosyl-L-homocysteine + H(+). Functionally, methylates the class 1 translation termination release factors RF1/PrfA and RF2/PrfB on the glutamine residue of the universally conserved GGQ motif. The protein is Release factor glutamine methyltransferase (prmC) of Thermotoga maritima (strain ATCC 43589 / DSM 3109 / JCM 10099 / NBRC 100826 / MSB8).